Consider the following 133-residue polypeptide: T-cell receptor beta chain V region 86T1 (133 aa).

An N-terminal signal peptide occupies residues 1 to 21; it reads MSCRLLLYVSLCLVETALMNT. Residues 22–113 form a v segment region; it reads KITQSPRYLI…SAVYFCASSH (92 aa). N-linked (GlcNAc...) asparagine glycosylation is found at asparagine 36 and asparagine 75. Cysteines 41 and 109 form a disulfide. The interval 114–133 is j segment; the sequence is GQGVSGNTLYFGEGSRLIVV.

This Mus musculus (Mouse) protein is T-cell receptor beta chain V region 86T1.